The primary structure comprises 273 residues: uncharacterized protein (273 aa).

Belongs to the PhyH family.

This is an uncharacterized protein from Mycobacterium tuberculosis (strain ATCC 25618 / H37Rv).